The chain runs to 378 residues: Chaperone protein DnaJ (378 aa).

The J domain occupies 6–70 (DYYDVLGVSR…QKRQQYDQFG (65 aa)). A CR-type zinc finger spans residues 137 to 219 (GKTSEISYSR…CHGKGVKTQK (83 aa)). Zn(2+) is bound by residues Cys150, Cys153, Cys167, Cys170, Cys193, Cys196, Cys207, and Cys210. 4 CXXCXGXG motif repeats span residues 150–157 (CEVCKGSG), 167–174 (CDKCGGSG), 193–200 (CDKCAGSG), and 207–214 (CHNCHGKG).

The protein belongs to the DnaJ family. In terms of assembly, homodimer. Requires Zn(2+) as cofactor.

The protein localises to the cytoplasm. Functionally, participates actively in the response to hyperosmotic and heat shock by preventing the aggregation of stress-denatured proteins and by disaggregating proteins, also in an autonomous, DnaK-independent fashion. Unfolded proteins bind initially to DnaJ; upon interaction with the DnaJ-bound protein, DnaK hydrolyzes its bound ATP, resulting in the formation of a stable complex. GrpE releases ADP from DnaK; ATP binding to DnaK triggers the release of the substrate protein, thus completing the reaction cycle. Several rounds of ATP-dependent interactions between DnaJ, DnaK and GrpE are required for fully efficient folding. Also involved, together with DnaK and GrpE, in the DNA replication of plasmids through activation of initiation proteins. The polypeptide is Chaperone protein DnaJ (Lactobacillus delbrueckii subsp. bulgaricus (strain ATCC BAA-365 / Lb-18)).